We begin with the raw amino-acid sequence, 618 residues long: Carbamoyl phosphate synthase large chain, C-terminal section (618 aa).

The interval 1–78 is oligomerization domain; sequence MDMEKLKEIL…ETFVYKEQDE (78 aa). The tract at residues 79–477 is carbamoyl phosphate synthetic domain; the sequence is SNPSDRKKVI…YKAQLSANME (399 aa). The ATP-grasp domain occupies 208 to 399; it reads SKLLKKLNIP…LAKLATKIML (192 aa). Residues R244, K283, L285, E290, G315, V316, H317, S318, Q358, and E370 each coordinate ATP. Q358, E370, and N372 together coordinate Mg(2+). Q358, E370, and N372 together coordinate Mn(2+). Residues 476–618 form the MGS-like domain; sequence MELPIVGNVF…ELDARIKNRF (143 aa). Positions 478 to 618 are allosteric domain; sequence LPIVGNVFIS…ELDARIKNRF (141 aa).

This sequence belongs to the CarB family. As to quaternary structure, composed of two chains; the small (or glutamine) chain promotes the hydrolysis of glutamine to ammonia, which is used by the large (or ammonia) chain to synthesize carbamoyl phosphate. Tetramer of heterodimers (alpha,beta)4. Mg(2+) is required as a cofactor. Requires Mn(2+) as cofactor.

The catalysed reaction is hydrogencarbonate + L-glutamine + 2 ATP + H2O = carbamoyl phosphate + L-glutamate + 2 ADP + phosphate + 2 H(+). It carries out the reaction hydrogencarbonate + NH4(+) + 2 ATP = carbamoyl phosphate + 2 ADP + phosphate + 2 H(+). It functions in the pathway amino-acid biosynthesis; L-arginine biosynthesis; carbamoyl phosphate from bicarbonate: step 1/1. Its pathway is pyrimidine metabolism; UMP biosynthesis via de novo pathway; (S)-dihydroorotate from bicarbonate: step 1/3. Large subunit of the glutamine-dependent carbamoyl phosphate synthetase (CPSase). CPSase catalyzes the formation of carbamoyl phosphate from the ammonia moiety of glutamine, carbonate, and phosphate donated by ATP, constituting the first step of 2 biosynthetic pathways, one leading to arginine and/or urea and the other to pyrimidine nucleotides. The large subunit (synthetase) binds the substrates ammonia (free or transferred from glutamine from the small subunit), hydrogencarbonate and ATP and carries out an ATP-coupled ligase reaction, activating hydrogencarbonate by forming carboxy phosphate which reacts with ammonia to form carbamoyl phosphate. This Methanocaldococcus jannaschii (strain ATCC 43067 / DSM 2661 / JAL-1 / JCM 10045 / NBRC 100440) (Methanococcus jannaschii) protein is Carbamoyl phosphate synthase large chain, C-terminal section (carB2).